Reading from the N-terminus, the 562-residue chain is Sesquiterpene synthase (562 aa).

Residues D315, D319, and E467 each coordinate Mg(2+). Positions 315 to 319 match the DDXXD motif motif; it reads DDIYD.

Belongs to the terpene synthase family. Tpsa subfamily. Requires Mg(2+) as cofactor. Mn(2+) serves as cofactor.

Its function is as follows. Catalyzes the formation of beta-elemol, guaiol and bulnesol. This Santalum spicatum (Australian sandalwood) protein is Sesquiterpene synthase.